The chain runs to 231 residues: ATP-dependent dethiobiotin synthetase BioD 2 (231 aa).

13-18 (SVGKTV) contributes to the ATP binding site. Thr-17 contributes to the Mg(2+) binding site. The active site involves Lys-38. ATP contacts are provided by residues Asp-55, 112–115 (EGTG), 172–173 (NR), 201–203 (PYL), and Gln-208. Asp-55 and Glu-112 together coordinate Mg(2+).

The protein belongs to the dethiobiotin synthetase family. Homodimer. Mg(2+) is required as a cofactor.

Its subcellular location is the cytoplasm. It carries out the reaction (7R,8S)-7,8-diammoniononanoate + CO2 + ATP = (4R,5S)-dethiobiotin + ADP + phosphate + 3 H(+). The protein operates within cofactor biosynthesis; biotin biosynthesis; biotin from 7,8-diaminononanoate: step 1/2. Its function is as follows. Catalyzes a mechanistically unusual reaction, the ATP-dependent insertion of CO2 between the N7 and N8 nitrogen atoms of 7,8-diaminopelargonic acid (DAPA, also called 7,8-diammoniononanoate) to form a ureido ring. The sequence is that of ATP-dependent dethiobiotin synthetase BioD 2 from Escherichia coli O157:H7.